We begin with the raw amino-acid sequence, 252 residues long: Sulfate transporter CysZ (252 aa).

Transmembrane regions (helical) follow at residues 29–49 (FVLL…FYIF), 66–86 (FLSW…LATF), 141–160 (LVYI…IPAL), 164–186 (VAPF…DYPF), and 212–232 (ALVS…PVAV).

The protein belongs to the CysZ family.

It localises to the cell inner membrane. In terms of biological role, high affinity, high specificity proton-dependent sulfate transporter, which mediates sulfate uptake. Provides the sulfur source for the cysteine synthesis pathway. The sequence is that of Sulfate transporter CysZ from Vibrio atlanticus (strain LGP32) (Vibrio splendidus (strain Mel32)).